The chain runs to 177 residues: ATP synthase subunit delta (177 aa).

Belongs to the ATPase delta chain family. As to quaternary structure, F-type ATPases have 2 components, F(1) - the catalytic core - and F(0) - the membrane proton channel. F(1) has five subunits: alpha(3), beta(3), gamma(1), delta(1), epsilon(1). F(0) has three main subunits: a(1), b(2) and c(10-14). The alpha and beta chains form an alternating ring which encloses part of the gamma chain. F(1) is attached to F(0) by a central stalk formed by the gamma and epsilon chains, while a peripheral stalk is formed by the delta and b chains.

It is found in the cell membrane. Its function is as follows. F(1)F(0) ATP synthase produces ATP from ADP in the presence of a proton or sodium gradient. F-type ATPases consist of two structural domains, F(1) containing the extramembraneous catalytic core and F(0) containing the membrane proton channel, linked together by a central stalk and a peripheral stalk. During catalysis, ATP synthesis in the catalytic domain of F(1) is coupled via a rotary mechanism of the central stalk subunits to proton translocation. This protein is part of the stalk that links CF(0) to CF(1). It either transmits conformational changes from CF(0) to CF(1) or is implicated in proton conduction. In Exiguobacterium sp. (strain ATCC BAA-1283 / AT1b), this protein is ATP synthase subunit delta.